Here is a 386-residue protein sequence, read N- to C-terminus: Succinate--CoA ligase [ADP-forming] subunit beta (386 aa).

ATP-binding residues include lysine 46, glutamate 99, alanine 102, and glutamate 107. Residues asparagine 199 and aspartate 213 each coordinate Mg(2+). Residues asparagine 264 and 321–323 (GIM) contribute to the substrate site.

This sequence belongs to the succinate/malate CoA ligase beta subunit family. Heterotetramer of two alpha and two beta subunits. Requires Mg(2+) as cofactor.

The catalysed reaction is succinate + ATP + CoA = succinyl-CoA + ADP + phosphate. The enzyme catalyses GTP + succinate + CoA = succinyl-CoA + GDP + phosphate. It functions in the pathway carbohydrate metabolism; tricarboxylic acid cycle; succinate from succinyl-CoA (ligase route): step 1/1. Functionally, succinyl-CoA synthetase functions in the citric acid cycle (TCA), coupling the hydrolysis of succinyl-CoA to the synthesis of either ATP or GTP and thus represents the only step of substrate-level phosphorylation in the TCA. The beta subunit provides nucleotide specificity of the enzyme and binds the substrate succinate, while the binding sites for coenzyme A and phosphate are found in the alpha subunit. The sequence is that of Succinate--CoA ligase [ADP-forming] subunit beta from Orientia tsutsugamushi (strain Boryong) (Rickettsia tsutsugamushi).